Reading from the N-terminus, the 331-residue chain is Aldo-keto reductase YhdN (331 aa).

NADP(+)-binding positions include 20-21 and Asp-52; that span reads TW. The active-site Proton donor is Tyr-57. NADP(+) contacts are provided by residues Gln-175, 203–208, Lys-214, Arg-227, 280–282, and Gln-286; these read YGSLCR and GAR.

It belongs to the aldo/keto reductase family. Aldo/keto reductase 11 subfamily. As to quaternary structure, monomer.

Its function is as follows. Aldo-keto reductase (AKR) that displays broad substrate specificity in vitro. Is able to reduce the standard AKR substrates DL-glyceraldehyde, D-erythrose, methylglyoxal, p-nitrobenzaldehyde, benzaldehyde and butyraldehyde, in the presence of NADPH. Cannot use NADH as a cosubstrate. Does not act on glucose, 2-pyridine carboxyaldehyde, fructose and xylose. The physiological function of this enzyme is not clear. May play a role in bacterial stress response and/or in detoxification of reactive aldehydes. The chain is Aldo-keto reductase YhdN (yhdN) from Bacillus subtilis (strain 168).